A 224-amino-acid chain; its full sequence is Putative cytochrome c-type biogenesis protein DbsD-like (224 aa).

5 helical membrane-spanning segments follow: residues 32-52 (FIFL…ILPV), 74-94 (FLFC…ATLI), 104-124 (GIPT…LNIV), 150-170 (GIGI…LVWI), and 176-196 (IFTG…PIII).

Belongs to the DsbD family.

The protein resides in the plastid. It is found in the chloroplast membrane. In terms of biological role, could be involved in cytochrome c synthesis. The sequence is that of Putative cytochrome c-type biogenesis protein DbsD-like from Pyropia yezoensis (Susabi-nori).